Consider the following 480-residue polypeptide: Beta-glucosidase A (480 aa).

Catalysis depends on Glu177, which acts as the Proton donor. The Nucleophile role is filled by Glu378.

The protein belongs to the glycosyl hydrolase 1 family.

It carries out the reaction Hydrolysis of terminal, non-reducing beta-D-glucosyl residues with release of beta-D-glucose.. The protein is Beta-glucosidase A (bglA) of Enterobacter agglomerans (Erwinia herbicola).